The sequence spans 138 residues: Cysteine desulfuration protein SufE (138 aa).

Cysteine 51 serves as the catalytic Cysteine persulfide intermediate.

This sequence belongs to the SufE family. As to quaternary structure, homodimer. Interacts with SufS.

It localises to the cytoplasm. It functions in the pathway cofactor biosynthesis; iron-sulfur cluster biosynthesis. Its function is as follows. Participates in cysteine desulfuration mediated by SufS. Cysteine desulfuration mobilizes sulfur from L-cysteine to yield L-alanine and constitutes an essential step in sulfur metabolism for biosynthesis of a variety of sulfur-containing biomolecules. Functions as a sulfur acceptor for SufS, by mediating the direct transfer of the sulfur atom from the S-sulfanylcysteine of SufS, an intermediate product of cysteine desulfuration process. In Klebsiella pneumoniae (strain 342), this protein is Cysteine desulfuration protein SufE.